Here is a 273-residue protein sequence, read N- to C-terminus: Phosphate import ATP-binding protein PstB (273 aa).

In terms of domain architecture, ABC transporter spans 18–257 (ISLQNVTISY…EFDKTKKIFN (240 aa)). 50–57 (GPSGCGKS) lines the ATP pocket.

It belongs to the ABC transporter superfamily. Phosphate importer (TC 3.A.1.7) family. In terms of assembly, the complex is composed of two ATP-binding proteins (PstB), two transmembrane proteins (PstC and PstA) and a solute-binding protein (PstS).

Its subcellular location is the cell inner membrane. It catalyses the reaction phosphate(out) + ATP + H2O = ADP + 2 phosphate(in) + H(+). Its function is as follows. Part of the ABC transporter complex PstSACB involved in phosphate import. Responsible for energy coupling to the transport system. The protein is Phosphate import ATP-binding protein PstB of Prochlorococcus marinus (strain SARG / CCMP1375 / SS120).